Reading from the N-terminus, the 246-residue chain is MDWQKITEKMCDFIQEKVKNSQSQGVVLGLSGGIDSALVATLCKRALKENVFALLMPTQISNKANLEDALRLCADLNLEYKIIEIQSILDAFIKQSENTTLVSLGNFAARIRMSLLYDYSALKNSLVIGTSNKSELLLGYGTIYGDLACAFNPIGSLYKSEIYALAKYLNLHENFIKKAPSADLWENQSDEADLGFSYTKIDEGLKALETNDEKLLRTLDPSLIAMLKNRMQKNAFKGKMPEILEI.

Position 29–36 (29–36 (GLSGGIDS)) interacts with ATP. Aspartate 35 lines the Mg(2+) pocket. Residue arginine 110 participates in deamido-NAD(+) binding. ATP is bound at residue threonine 130. Glutamate 135 provides a ligand contact to Mg(2+). Residues lysine 159 and serine 181 each contribute to the ATP site.

This sequence belongs to the NAD synthetase family. As to quaternary structure, homodimer.

The enzyme catalyses deamido-NAD(+) + NH4(+) + ATP = AMP + diphosphate + NAD(+) + H(+). It functions in the pathway cofactor biosynthesis; NAD(+) biosynthesis; NAD(+) from deamido-NAD(+) (ammonia route): step 1/1. Its function is as follows. Catalyzes the ATP-dependent amidation of deamido-NAD to form NAD. Uses ammonia as a nitrogen source. This is NH(3)-dependent NAD(+) synthetase from Campylobacter jejuni subsp. jejuni serotype O:2 (strain ATCC 700819 / NCTC 11168).